The sequence spans 359 residues: Methylthioribose-1-phosphate isomerase (359 aa).

Residues 50–52 (RGA), R93, and Q200 each bind substrate. Residue D241 is the Proton donor of the active site. 251–252 (NK) provides a ligand contact to substrate.

Belongs to the eIF-2B alpha/beta/delta subunits family. MtnA subfamily.

The enzyme catalyses 5-(methylsulfanyl)-alpha-D-ribose 1-phosphate = 5-(methylsulfanyl)-D-ribulose 1-phosphate. Its pathway is amino-acid biosynthesis; L-methionine biosynthesis via salvage pathway; L-methionine from S-methyl-5-thio-alpha-D-ribose 1-phosphate: step 1/6. Its function is as follows. Catalyzes the interconversion of methylthioribose-1-phosphate (MTR-1-P) into methylthioribulose-1-phosphate (MTRu-1-P). The protein is Methylthioribose-1-phosphate isomerase of Symbiobacterium thermophilum (strain DSM 24528 / JCM 14929 / IAM 14863 / T).